Here is a 76-residue protein sequence, read N- to C-terminus: Omega-scoloptoxin(13)-Ssm2b (76 aa).

Positions 1 to 22 (MAYIYALIFAIVVCMNTDVIQA) are cleaved as a signal peptide.

This sequence belongs to the scoloptoxin-13 family. In terms of processing, contains 3 disulfide bonds. As to expression, expressed by the venom gland.

Its subcellular location is the secreted. Inhibits voltage-gated calcium channel (Cav) currents. This Scolopendra mutilans (Chinese red-headed centipede) protein is Omega-scoloptoxin(13)-Ssm2b.